The chain runs to 353 residues: UDP-3-O-acylglucosamine N-acyltransferase (353 aa).

Histidine 242 (proton acceptor) is an active-site residue.

This sequence belongs to the transferase hexapeptide repeat family. LpxD subfamily. Homotrimer.

The catalysed reaction is a UDP-3-O-[(3R)-3-hydroxyacyl]-alpha-D-glucosamine + a (3R)-hydroxyacyl-[ACP] = a UDP-2-N,3-O-bis[(3R)-3-hydroxyacyl]-alpha-D-glucosamine + holo-[ACP] + H(+). Its pathway is bacterial outer membrane biogenesis; LPS lipid A biosynthesis. Functionally, catalyzes the N-acylation of UDP-3-O-acylglucosamine using 3-hydroxyacyl-ACP as the acyl donor. Is involved in the biosynthesis of lipid A, a phosphorylated glycolipid that anchors the lipopolysaccharide to the outer membrane of the cell. The polypeptide is UDP-3-O-acylglucosamine N-acyltransferase (Pseudomonas aeruginosa (strain UCBPP-PA14)).